The primary structure comprises 367 residues: 2-aminoethylphosphonate--pyruvate transaminase (367 aa).

Residue lysine 193 is modified to N6-(pyridoxal phosphate)lysine.

The protein belongs to the class-V pyridoxal-phosphate-dependent aminotransferase family. PhnW subfamily. As to quaternary structure, homodimer. Pyridoxal 5'-phosphate is required as a cofactor.

The catalysed reaction is (2-aminoethyl)phosphonate + pyruvate = phosphonoacetaldehyde + L-alanine. Functionally, involved in phosphonate degradation. In Vibrio cholerae serotype O1 (strain ATCC 39541 / Classical Ogawa 395 / O395), this protein is 2-aminoethylphosphonate--pyruvate transaminase.